A 361-amino-acid chain; its full sequence is Phosphoserine aminotransferase (361 aa).

Residue arginine 42 coordinates L-glutamate. Residues 76–77 (AT), tryptophan 102, threonine 152, aspartate 172, and glutamine 195 contribute to the pyridoxal 5'-phosphate site. Lysine 196 bears the N6-(pyridoxal phosphate)lysine mark. A pyridoxal 5'-phosphate-binding site is contributed by 237 to 238 (NT).

It belongs to the class-V pyridoxal-phosphate-dependent aminotransferase family. SerC subfamily. In terms of assembly, homodimer. It depends on pyridoxal 5'-phosphate as a cofactor.

It localises to the cytoplasm. The catalysed reaction is O-phospho-L-serine + 2-oxoglutarate = 3-phosphooxypyruvate + L-glutamate. It catalyses the reaction 4-(phosphooxy)-L-threonine + 2-oxoglutarate = (R)-3-hydroxy-2-oxo-4-phosphooxybutanoate + L-glutamate. It participates in amino-acid biosynthesis; L-serine biosynthesis; L-serine from 3-phospho-D-glycerate: step 2/3. Its pathway is cofactor biosynthesis; pyridoxine 5'-phosphate biosynthesis; pyridoxine 5'-phosphate from D-erythrose 4-phosphate: step 3/5. In terms of biological role, catalyzes the reversible conversion of 3-phosphohydroxypyruvate to phosphoserine and of 3-hydroxy-2-oxo-4-phosphonooxybutanoate to phosphohydroxythreonine. The polypeptide is Phosphoserine aminotransferase (Stenotrophomonas maltophilia (strain R551-3)).